A 136-amino-acid chain; its full sequence is ATP synthase epsilon chain (136 aa).

Belongs to the ATPase epsilon chain family. As to quaternary structure, F-type ATPases have 2 components, CF(1) - the catalytic core - and CF(0) - the membrane proton channel. CF(1) has five subunits: alpha(3), beta(3), gamma(1), delta(1), epsilon(1). CF(0) has three main subunits: a, b and c.

Its subcellular location is the cell inner membrane. In terms of biological role, produces ATP from ADP in the presence of a proton gradient across the membrane. The sequence is that of ATP synthase epsilon chain from Persephonella marina (strain DSM 14350 / EX-H1).